The sequence spans 622 residues: Threonine--tRNA ligase (622 aa).

Residues 1–141 (MKTLLIHSDY…SRKITTERKE (141 aa)) are editing domain. Residues 199–498 (PHVKYIKEKE…TLENKPPALP (300 aa)) are catalytic. Zn(2+) contacts are provided by cysteine 291, histidine 343, and histidine 467.

The protein belongs to the class-II aminoacyl-tRNA synthetase family. Homodimer. Requires Zn(2+) as cofactor.

It is found in the cytoplasm. It carries out the reaction tRNA(Thr) + L-threonine + ATP = L-threonyl-tRNA(Thr) + AMP + diphosphate + H(+). Its function is as follows. Catalyzes the attachment of threonine to tRNA(Thr) in a two-step reaction: L-threonine is first activated by ATP to form Thr-AMP and then transferred to the acceptor end of tRNA(Thr). Also edits incorrectly charged L-seryl-tRNA(Thr). This Methanococcus maripaludis (strain C7 / ATCC BAA-1331) protein is Threonine--tRNA ligase.